Here is a 145-residue protein sequence, read N- to C-terminus: Basic phospholipase A2 PC16 (145 aa).

The N-terminal stretch at 1–21 (MYPAHLLLLLAVCVSLLGASA) is a signal peptide. The propeptide occupies 22-27 (IPPLPL). 7 disulfide bridges follow: Cys38–Cys98, Cys54–Cys144, Cys56–Cys72, Cys71–Cys125, Cys78–Cys118, Cys87–Cys111, and Cys105–Cys116. Positions 55, 57, and 59 each coordinate Ca(2+). The active site involves His75. Asp76 provides a ligand contact to Ca(2+). Asp119 is an active-site residue.

The protein belongs to the phospholipase A2 family. Group I subfamily. D49 sub-subfamily. Requires Ca(2+) as cofactor.

Its subcellular location is the secreted. The catalysed reaction is a 1,2-diacyl-sn-glycero-3-phosphocholine + H2O = a 1-acyl-sn-glycero-3-phosphocholine + a fatty acid + H(+). Functionally, PLA2 catalyzes the calcium-dependent hydrolysis of the 2-acyl groups in 3-sn-phosphoglycerides. This Laticauda laticaudata (Blue-ringed sea krait) protein is Basic phospholipase A2 PC16.